Consider the following 251-residue polypeptide: MLKKRIIPCLDVKDGRVVKGVNFVNLTDVGDPVDAARAYYEAGCDELVFLDITATSDNRETTVDMVRHVADQVFIPFTVGGGIRSVDDMNKMLKAGADKVAVNSSAIANPQLIKDCAEKFGSQCVVVAIDARKEADDSWHVYVAGGRKDTGIDLLAWVKEAVQLGAGEILLTSMDKDGTKSGFDLDMLNAVAQLADIPIIASGGAGNMEHMVEIFEKTPATGALAASIFHYGEVSIADTKKAMKEHGIEVR.

Active-site residues include aspartate 11 and aspartate 130.

The protein belongs to the HisA/HisF family. Heterodimer of HisH and HisF.

The protein resides in the cytoplasm. It carries out the reaction 5-[(5-phospho-1-deoxy-D-ribulos-1-ylimino)methylamino]-1-(5-phospho-beta-D-ribosyl)imidazole-4-carboxamide + L-glutamine = D-erythro-1-(imidazol-4-yl)glycerol 3-phosphate + 5-amino-1-(5-phospho-beta-D-ribosyl)imidazole-4-carboxamide + L-glutamate + H(+). It participates in amino-acid biosynthesis; L-histidine biosynthesis; L-histidine from 5-phospho-alpha-D-ribose 1-diphosphate: step 5/9. In terms of biological role, IGPS catalyzes the conversion of PRFAR and glutamine to IGP, AICAR and glutamate. The HisF subunit catalyzes the cyclization activity that produces IGP and AICAR from PRFAR using the ammonia provided by the HisH subunit. This chain is Imidazole glycerol phosphate synthase subunit HisF, found in Streptococcus mutans serotype c (strain ATCC 700610 / UA159).